Reading from the N-terminus, the 328-residue chain is Flap endonuclease 1 (328 aa).

The interval 1 to 98 (MGVKLRDVVS…ETVSRRADIR (98 aa)) is N-domain. Residues D27, D80, E152, E154, D173, D175, and D226 each contribute to the Mg(2+) site. The segment at 116-247 (RAKKYAVRSS…RGLKLIREKG (132 aa)) is I-domain. An interaction with PCNA region spans residues 320–328 (TQKSLEDWF).

Belongs to the XPG/RAD2 endonuclease family. FEN1 subfamily. Interacts with PCNA. PCNA stimulates the nuclease activity without altering cleavage specificity. Mg(2+) serves as cofactor.

Its function is as follows. Structure-specific nuclease with 5'-flap endonuclease and 5'-3' exonuclease activities involved in DNA replication and repair. During DNA replication, cleaves the 5'-overhanging flap structure that is generated by displacement synthesis when DNA polymerase encounters the 5'-end of a downstream Okazaki fragment. Binds the unpaired 3'-DNA end and kinks the DNA to facilitate 5' cleavage specificity. Cleaves one nucleotide into the double-stranded DNA from the junction in flap DNA, leaving a nick for ligation. Also involved in the base excision repair (BER) pathway. Acts as a genome stabilization factor that prevents flaps from equilibrating into structures that lead to duplications and deletions. Also possesses 5'-3' exonuclease activity on nicked or gapped double-stranded DNA. The sequence is that of Flap endonuclease 1 from Methanothermobacter thermautotrophicus (strain ATCC 29096 / DSM 1053 / JCM 10044 / NBRC 100330 / Delta H) (Methanobacterium thermoautotrophicum).